Here is a 139-residue protein sequence, read N- to C-terminus: D-ribose pyranase (139 aa).

The active-site Proton donor is His20. Substrate contacts are provided by residues Asp28, His106, and 128 to 130; that span reads YAN.

The protein belongs to the RbsD / FucU family. RbsD subfamily. Homodecamer.

The protein resides in the cytoplasm. The enzyme catalyses beta-D-ribopyranose = beta-D-ribofuranose. It participates in carbohydrate metabolism; D-ribose degradation; D-ribose 5-phosphate from beta-D-ribopyranose: step 1/2. Catalyzes the interconversion of beta-pyran and beta-furan forms of D-ribose. The chain is D-ribose pyranase from Edwardsiella ictaluri (strain 93-146).